The primary structure comprises 295 residues: UDP-N-acetylenolpyruvoylglucosamine reductase (295 aa).

The region spanning 23–188 (KVGGPADFLA…ISAKFALKPG (166 aa)) is the FAD-binding PCMH-type domain. The active site involves Arg167. Ser217 serves as the catalytic Proton donor. Glu287 is an active-site residue.

The protein belongs to the MurB family. FAD is required as a cofactor.

It is found in the cytoplasm. It catalyses the reaction UDP-N-acetyl-alpha-D-muramate + NADP(+) = UDP-N-acetyl-3-O-(1-carboxyvinyl)-alpha-D-glucosamine + NADPH + H(+). Its pathway is cell wall biogenesis; peptidoglycan biosynthesis. Cell wall formation. The sequence is that of UDP-N-acetylenolpyruvoylglucosamine reductase from Streptococcus pyogenes serotype M12 (strain MGAS9429).